Consider the following 235-residue polypeptide: Small ribosomal subunit protein uS10m (235 aa).

The N-terminal 19 residues, 1-19 (MLRTSVRSPLLYRCLSKRF), are a transit peptide targeting the mitochondrion.

Belongs to the universal ribosomal protein uS10 family. Part of the mitochondrial small ribosomal subunit.

The protein localises to the mitochondrion. Functionally, involved in mitochondrial genome encoded proteins translation. Involved in the binding of tRNA to the ribosomes. The protein is Small ribosomal subunit protein uS10m (RSM10) of Candida glabrata (strain ATCC 2001 / BCRC 20586 / JCM 3761 / NBRC 0622 / NRRL Y-65 / CBS 138) (Yeast).